The following is a 315-amino-acid chain: DDRGK domain-containing protein 1 (315 aa).

Residues 1–28 traverse the membrane as a helical segment; that stretch reads MVGPWVYLVAAVLLIGLILFLTRSRGRA. Residues 1-115 are mediates interaction with CDK5RAP3; sequence MVGPWVYLVA…IEKPAEVHPT (115 aa). At 29-315 the chain is on the cytoplasmic side; sequence AAADGEPLHN…GQDLPAQASA (287 aa). The interval 30–184 is disordered; sequence AADGEPLHNE…ERKAQEEQAR (155 aa). The segment covering 34 to 43 has biased composition (basic and acidic residues); sequence EPLHNEEERA. Residue Ser73 is modified to Phosphoserine. The tract at residues 119–217 is mediates interaction with TRIP4; sequence GAKKLRKLEE…MTEEQSHSFL (99 aa). A compositionally biased stretch (basic and acidic residues) spans 125–184; sequence KLEEKQARKAQREAEEAEREERKRLESQREAEWKKEEERLRLKEEQKEEEERKAQEEQAR. A UFM1-interacting motif (UFIM) motif is present at residues 196 to 210; the sequence is AFVVEEEGVSETMTE. The interval 217–315 is mediates interaction with UFL1; sequence LTEFINYIKK…GQDLPAQASA (99 aa). The 45-residue stretch at 230 to 274 folds into the PCI domain; the sequence is VLLEDLAFQMGLRTQDAINRIQDLLTEGTLTGVIDDRGKFIYITP. Lys268 is covalently cross-linked (Glycyl lysine isopeptide (Lys-Gly) (interchain with G-Cter in UFM1)).

The protein belongs to the DDRGK1 family. As to quaternary structure, component of the UFM1 ribosome E3 ligase (UREL) complex, composed of UFL1, DDRGK1 and CDK5RAP3. Interacts with (unphosphorylated) ERN1/IRE1-alpha; interaction is dependent on UFM1 and takes place in response to endoplasmic reticulum stress, regulating ERN1/IRE1-alpha stability. Interacts with NFKBIA. Interacts with SOX9. Post-translationally, ufmylated; conjugated to ubiquitin-like protein UFM1, probably at Lys-268 by UFL1. The relevance of ufmylation is however unclear: as DDRGK1 acts as a substrate adapter for ufmylation, it is uncertain whether ufmylation is a collateral effect of the ufmylation process or whether it is required to regulate its activity. In terms of processing, ubiquitinated. Ubiquitination probably triggers proteasomal degradation and is negatively regulated by UFL1, the enzyme involved in the ufmylation of DDRGK1. As to expression, ubiquitously expressed. Higher expression in pancreatic islets, pancreatic acini and testis (at protein level). Highly expressed in the intestinal exocrine cells.

Its subcellular location is the endoplasmic reticulum membrane. Functionally, component of the UFM1 ribosome E3 ligase (UREL) complex, a multiprotein complex that catalyzes ufmylation of endoplasmic reticulum-docked proteins. The UREL complex plays a key role in ribosome recycling by mediating mono-ufmylation of the RPL26/uL24 subunit of the 60S ribosome following ribosome dissociation: ufmylation weakens the junction between post-termination 60S subunits and SEC61 translocons, promoting release and recycling of the large ribosomal subunit from the endoplasmic reticulum membrane. Ufmylation of RPL26/uL24 and subsequent 60S ribosome recycling either take place after normal termination of translation or after ribosome stalling during cotranslational translocation at the endoplasmic reticulum. Within the UREL complex, DDRGK1 tethers the complex to the endoplasmic reticulum membrane to restrict its activity to endoplasmic reticulum-docked ribosomes and acts as an ufmylation 'reader': following RPL26/uL24 ufmylation, DDRGK1 specifically binds to ufmylated RPL26/uL24 via its UFIM motif, resulting in stable association between the 60S ribosome and the UREL complex, followed by dissociation of the 60S ribosome subunit from the endoplasmic reticulum membrane. The UREL complex is also involved in reticulophagy in response to endoplasmic reticulum stress by promoting ufmylation of proteins such as CYB5R3 and RPN1, thereby promoting lysosomal degradation of ufmylated proteins. Ufmylation-dependent reticulophagy inhibits the unfolded protein response (UPR) by regulating ERN1/IRE1-alpha stability. Acts as a regulator of immunity by promoting differentiation of B-cells into plasma cells: acts by promoting expansion of the endoplasmic reticulum and regulating the unfolded protein response (UPR). May also be required for TRIP4 ufmylation. May play a role in NF-kappa-B-mediated transcription through regulation of the phosphorylation and the degradation of NFKBIA, the inhibitor of NF-kappa-B. Plays a role in cartilage development through SOX9, inhibiting the ubiquitin-mediated proteasomal degradation of this transcriptional regulator. Required for stabilization and ufmylation of ATG9A. This is DDRGK domain-containing protein 1 from Mus musculus (Mouse).